Here is a 197-residue protein sequence, read N- to C-terminus: dITP/XTP pyrophosphatase (197 aa).

8–13 (TGNAGK) is a binding site for substrate. Mg(2+) contacts are provided by Glu-40 and Asp-69. The active-site Proton acceptor is Asp-69. Residues Ser-70, 154 to 157 (FGYD), Lys-177, and 182 to 183 (HR) contribute to the substrate site.

Belongs to the HAM1 NTPase family. Homodimer. Mg(2+) serves as cofactor.

The enzyme catalyses XTP + H2O = XMP + diphosphate + H(+). The catalysed reaction is dITP + H2O = dIMP + diphosphate + H(+). It carries out the reaction ITP + H2O = IMP + diphosphate + H(+). Its function is as follows. Pyrophosphatase that catalyzes the hydrolysis of nucleoside triphosphates to their monophosphate derivatives, with a high preference for the non-canonical purine nucleotides XTP (xanthosine triphosphate), dITP (deoxyinosine triphosphate) and ITP. Seems to function as a house-cleaning enzyme that removes non-canonical purine nucleotides from the nucleotide pool, thus preventing their incorporation into DNA/RNA and avoiding chromosomal lesions. In Salmonella paratyphi A (strain ATCC 9150 / SARB42), this protein is dITP/XTP pyrophosphatase (rdgB).